We begin with the raw amino-acid sequence, 1137 residues long: Protein sel-1 homolog 3 (1137 aa).

Positions 1–42 are disordered; the sequence is MQWRGAGLWWPRRRQQQQQQQPPPPAFGPPAAAMVPPSRGVS. Residues Asn-206 and Asn-387 are each glycosylated (N-linked (GlcNAc...) asparagine). Sel1-like repeat units follow at residues 575–609, 611–647, 694–730, 732–767, 768–800, 801–839, and 840–877; these read HKASYYLTVFYETGLNGPRDQLQGMLYSLVGGQGS, RLSSMNLGYKHYQGVDSYPLDWELSYAYYSNIATKTP, AAAQQRLAQMLFWGQQGVAKNPEAAIEWYAKGALETE, PALIYDYAIVLFKGQGVKKNRRLALELMKKAASKGL, HQAVNGLGWYYHKFRKNYAKAAKYWLKAEEMGN, PDASYNLGVLYLDGIFPGVPGRNLTLAGEYFHKAAQGGH, and IEGTLWCSLYYITGNLETFPRDPEKAVVWAKHVAEKNG. A Phosphoserine modification is found at Ser-613. An N-linked (GlcNAc...) asparagine glycan is attached at Asn-942. One copy of the Sel1-like 8 repeat lies at 952–988; sequence SFAYLKMGDLYYYGHQNQSQDLELSVQMYAQAALDGD. The helical transmembrane segment at 1067–1087 threads the bilayer; the sequence is LIYFLGTFLLSVVIAWMVLYL. The disordered stretch occupies residues 1100 to 1137; the sequence is AWVSADPTSSTPSPAVPPAADASDHDPPMMANGPEPRG. The span at 1102 to 1120 shows a compositional bias: low complexity; it reads VSADPTSSTPSPAVPPAAD.

The protein resides in the membrane. The protein is Protein sel-1 homolog 3 (Sel1l3) of Mus musculus (Mouse).